Reading from the N-terminus, the 396-residue chain is MEDDDRPRKYPKLNHDEVQEGSEPVMTGAVGAVHDDDAESADSDNRASPSNDRIDNDVKQACDEEGQDAHGKDGPPTLSKNQLKKLKRKEHWEAMREQRKVKRKEKLVAKRERRRAALEQAKQEGAEATEETRKAFESTQKKFQRSTLLPVTLVLDCSYDDLMLDKERVSLGAQITRSYSDNSRAPFRSHLVVSSFNKLLKERFDTVLGKTHENWKGVRFLQEDFAEAAEMAKEWMQGPKGGQLAGVFADKADAKPEDGEIVYLSSDSPNILTELKPYSTYIIGGLVDKNRHKGICYKSAVAKGIKTAKLPIGEYIQMAHRQVLATNHVVEIMIRWLELGDWGKAFIQVIPQRKGGKLKSADHESEDQTPRESVEAVEAEPDGEGAAAEAGEGGKE.

Composition is skewed to basic and acidic residues over residues 1 to 18 (MEDD…HDEV) and 52 to 73 (DRID…HGKD). Residues 1 to 109 (MEDDDRPRKY…KVKRKEKLVA (109 aa)) form a disordered region. Residues 139–357 (TQKKFQRSTL…QVIPQRKGGK (219 aa)) form the SAM-dependent MTase TRM10-type domain. S-adenosyl-L-methionine contacts are provided by residues 264–265 (LS), glycine 284, 288–292 (DKNRH), cysteine 296, leucine 310, and 322–324 (QVL). The active-site Proton acceptor is the aspartate 288. Residues 354–396 (KGGKLKSADHESEDQTPRESVEAVEAEPDGEGAAAEAGEGGKE) form a disordered region. Positions 359 to 374 (KSADHESEDQTPRESV) are enriched in basic and acidic residues.

Belongs to the class IV-like SAM-binding methyltransferase superfamily. TRM10 family. As to quaternary structure, monomer.

It localises to the cytoplasm. The protein localises to the nucleus. It carries out the reaction guanosine(9) in tRNA + S-adenosyl-L-methionine = N(1)-methylguanosine(9) in tRNA + S-adenosyl-L-homocysteine + H(+). In terms of biological role, S-adenosyl-L-methionine-dependent guanine N(1)-methyltransferase that catalyzes the formation of N(1)-methylguanine at position 9 (m1G9) in cytoplasmic tRNA. This is tRNA (guanine(9)-N1)-methyltransferase from Aspergillus fumigatus (strain ATCC MYA-4609 / CBS 101355 / FGSC A1100 / Af293) (Neosartorya fumigata).